The primary structure comprises 403 residues: Phosphoglycerate kinase (403 aa).

Residues 24–26 (DLN), Arg39, 62–65 (HLGR), Arg121, and Arg161 contribute to the substrate site. ATP contacts are provided by residues Lys211, Gly299, Glu330, and 359 to 362 (GGDS).

Belongs to the phosphoglycerate kinase family. As to quaternary structure, monomer.

It localises to the cytoplasm. It catalyses the reaction (2R)-3-phosphoglycerate + ATP = (2R)-3-phospho-glyceroyl phosphate + ADP. It participates in carbohydrate degradation; glycolysis; pyruvate from D-glyceraldehyde 3-phosphate: step 2/5. The protein is Phosphoglycerate kinase of Rhodococcus opacus (strain B4).